The sequence spans 89 residues: Small ribosomal subunit protein uS15 (89 aa).

It belongs to the universal ribosomal protein uS15 family. As to quaternary structure, part of the 30S ribosomal subunit. Forms a bridge to the 50S subunit in the 70S ribosome, contacting the 23S rRNA.

One of the primary rRNA binding proteins, it binds directly to 16S rRNA where it helps nucleate assembly of the platform of the 30S subunit by binding and bridging several RNA helices of the 16S rRNA. Its function is as follows. Forms an intersubunit bridge (bridge B4) with the 23S rRNA of the 50S subunit in the ribosome. This is Small ribosomal subunit protein uS15 from Shewanella loihica (strain ATCC BAA-1088 / PV-4).